Consider the following 270-residue polypeptide: L-fucose dehydrogenase (270 aa).

The NAD(+) site is built by arginine 19, isoleucine 21, aspartate 40, lysine 41, aspartate 62, valine 63, asparagine 89, tyrosine 154, lysine 158, isoleucine 187, threonine 189, and leucine 191. The active-site Proton acceptor is tyrosine 154.

This sequence belongs to the short-chain dehydrogenases/reductases (SDR) family. As to quaternary structure, homotetramer. As to expression, highly expressed in brain, placenta, liver and kidney.

It is found in the cytoplasm. It catalyses the reaction L-fucose + NAD(+) = L-fucono-1,5-lactone + NADH + H(+). The catalysed reaction is D-arabinose + NAD(+) = D-arabinono-1,5-lactone + NADH + H(+). The enzyme catalyses L-galactose + NAD(+) = L-galactono-1,5-lactone + NADH + H(+). It functions in the pathway carbohydrate degradation; L-fucose degradation. In terms of biological role, catalyzes the NAD(+)-dependent oxidation of L-fucose, yielding L-fucono-1,5-lactone, which rapidly converts spontaneously to L-fucone-1,4-lactone. Can also act on D-arabinose and L-galactose, with lower catalytic efficiency. Does not use NADPH. May be the initial enzyme of the L-fucose degradation pathway in mammals. This is L-fucose dehydrogenase from Homo sapiens (Human).